The chain runs to 278 residues: tRNA (guanine-N(7)-)-methyltransferase (278 aa).

S-adenosyl-L-methionine contacts are provided by residues Gly-63, 86 to 87, 119 to 120, and Leu-139; these read EL and NA. Asp-142 is a catalytic residue. An S-adenosyl-L-methionine-binding site is contributed by 217 to 219; the sequence is TEE. The disordered stretch occupies residues 259-278; it reads IDSTTTTTTSTATITEVESK. The segment covering 261–278 has biased composition (low complexity); that stretch reads STTTTTTSTATITEVESK.

The protein belongs to the class I-like SAM-binding methyltransferase superfamily. TrmB family.

The protein resides in the nucleus. The enzyme catalyses guanosine(46) in tRNA + S-adenosyl-L-methionine = N(7)-methylguanosine(46) in tRNA + S-adenosyl-L-homocysteine. It participates in tRNA modification; N(7)-methylguanine-tRNA biosynthesis. Functionally, catalyzes the formation of N(7)-methylguanine at position 46 (m7G46) in tRNA. This chain is tRNA (guanine-N(7)-)-methyltransferase (mettl1), found in Dictyostelium discoideum (Social amoeba).